Reading from the N-terminus, the 83-residue chain is Large ribosomal subunit protein uL23 (83 aa).

It belongs to the universal ribosomal protein uL23 family. As to quaternary structure, part of the 50S ribosomal subunit. Contacts protein L29.

In terms of biological role, binds to 23S rRNA. One of the proteins that surrounds the polypeptide exit tunnel on the outside of the ribosome. The polypeptide is Large ribosomal subunit protein uL23 (Thermoplasma volcanium (strain ATCC 51530 / DSM 4299 / JCM 9571 / NBRC 15438 / GSS1)).